Consider the following 135-residue polypeptide: Nucleoside diphosphate kinase (135 aa).

ATP is bound by residues Lys11, Phe59, Arg87, Thr93, Arg104, and Asn114. The Pros-phosphohistidine intermediate role is filled by His117.

The protein belongs to the NDK family. In terms of assembly, homotetramer. Requires Mg(2+) as cofactor.

Its subcellular location is the cytoplasm. It carries out the reaction a 2'-deoxyribonucleoside 5'-diphosphate + ATP = a 2'-deoxyribonucleoside 5'-triphosphate + ADP. The catalysed reaction is a ribonucleoside 5'-diphosphate + ATP = a ribonucleoside 5'-triphosphate + ADP. In terms of biological role, major role in the synthesis of nucleoside triphosphates other than ATP. The ATP gamma phosphate is transferred to the NDP beta phosphate via a ping-pong mechanism, using a phosphorylated active-site intermediate. The protein is Nucleoside diphosphate kinase of Marinomonas sp. (strain MWYL1).